The chain runs to 316 residues: MAVQVVQAVQAVHLESDAFLVCLNHALSTEKEEVMGLCIGELNDDTRSDSKFAYTGTEMRTVAEKVDAVRIVHIHSVIILRRSDKRKDRVEISPEQLSAASTEAERLAELTGRPMRVVGWYHSHPHITVWPSHVDVRTQAMYQMMDQGFVGLIFSCFIEDKNTKTGRVLYTCFQSIQAQKSSESLHGPRDFWSSSQHISIEGQKEEERYERIEIPIHIVPHVTIGKVCLESAVELPKILCQEEQDAYRRIHSLTHLDSVTKIHNGSVFTKNLCSQMSAVSGPLLQWLEDRLEQNQQHLQELQQEKEELMQELSSLE.

An N-acetylalanine modification is found at Ala2. Residues 12-179 (VHLESDAFLV…YTCFQSIQAQ (168 aa)) enclose the MPN domain. Residues His122, His124, and Asp135 each contribute to the Zn(2+) site. A JAMM motif motif is present at residues 122–135 (HSHPHITVWPSHVD). The residue at position 258 (Ser258) is a Phosphoserine.

This sequence belongs to the peptidase M67A family. BRCC36 subfamily. Component of the ARISC complex, at least composed of UIMC1/RAP80, ABRAXAS1, BRCC3/BRCC36, BABAM2 and BABAM1/NBA1. Component of the BRCA1-A complex, at least composed of BRCA1, BARD1, UIMC1/RAP80, ABRAXAS1, BRCC3/BRCC36, babam2 and BABAM1/NBA1. In the BRCA1-A complex, interacts directly with ABRAXAS1 and babam2. Component of the BRISC complex, at least composed of ABRAXAS2, BRCC3/BRCC36, BABAM2 and BABAM1/NBA1. Identified in a complex with SHMT2 and the other subunits of the BRISC complex. In the BRISC complex, interacts directly with ABRAXAS2. Identified in a complex with ABRAXAS2 and NUMA1. The BRISC complex interacts with the CSN complex. Component of the BRCA1/BRCA2 containing complex (BRCC), which also contains BRCA1, BRCA2, BARD1, BABAM2 and RAD51. BRCC is a ubiquitin E3 ligase complex that enhances cellular survival following DNA damage. Interacts with BRCA1. Binds polyubiquitin. Interacts with PWWP2B. Interacts with HDAC1; this interaction is enhanced in the presence of PWWP2B. Requires Zn(2+) as cofactor. In terms of tissue distribution, heart, brain, placenta, lung, liver, skeletal muscle, kidney and pancreas. Aberrantly expressed in the vast majority of breast tumors.

The protein resides in the nucleus. It localises to the cytoplasm. It is found in the cytoskeleton. Its subcellular location is the spindle pole. Metalloprotease that specifically cleaves 'Lys-63'-linked polyubiquitin chains. Does not have activity toward 'Lys-48'-linked polyubiquitin chains. Component of the BRCA1-A complex, a complex that specifically recognizes 'Lys-63'-linked ubiquitinated histones H2A and H2AX at DNA lesions sites, leading to target the BRCA1-BARD1 heterodimer to sites of DNA damage at double-strand breaks (DSBs). In the BRCA1-A complex, it specifically removes 'Lys-63'-linked ubiquitin on histones H2A and H2AX, antagonizing the RNF8-dependent ubiquitination at double-strand breaks (DSBs). Catalytic subunit of the BRISC complex, a multiprotein complex that specifically cleaves 'Lys-63'-linked ubiquitin in various substrates. Mediates the specific 'Lys-63'-specific deubiquitination associated with the COP9 signalosome complex (CSN), via the interaction of the BRISC complex with the CSN complex. The BRISC complex is required for normal mitotic spindle assembly and microtubule attachment to kinetochores via its role in deubiquitinating NUMA1. Plays a role in interferon signaling via its role in the deubiquitination of the interferon receptor IFNAR1; deubiquitination increases IFNAR1 activity by enhancing its stability and cell surface expression. Acts as a regulator of the NLRP3 inflammasome by mediating deubiquitination of NLRP3, leading to NLRP3 inflammasome assembly. Down-regulates the response to bacterial lipopolysaccharide (LPS) via its role in IFNAR1 deubiquitination. Deubiquitinates HDAC1 and PWWP2B leading to their stabilization. The chain is Lys-63-specific deubiquitinase BRCC36 (BRCC3) from Homo sapiens (Human).